An 875-amino-acid polypeptide reads, in one-letter code: Phosphoenolpyruvate carboxylase (875 aa).

Residues His-137 and Lys-542 contribute to the active site.

The protein belongs to the PEPCase type 1 family. Requires Mg(2+) as cofactor.

The enzyme catalyses oxaloacetate + phosphate = phosphoenolpyruvate + hydrogencarbonate. Functionally, forms oxaloacetate, a four-carbon dicarboxylic acid source for the tricarboxylic acid cycle. The protein is Phosphoenolpyruvate carboxylase of Pseudomonas putida (strain ATCC 47054 / DSM 6125 / CFBP 8728 / NCIMB 11950 / KT2440).